We begin with the raw amino-acid sequence, 624 residues long: Chaperone protein HtpG (624 aa).

Residues 1-336 (MKGQETRGFQ…SNDLPLNVSR (336 aa)) are a; substrate-binding. The segment at 337 to 552 (EILQDSSITR…NDEMSTQMAK (216 aa)) is b. The c stretch occupies residues 553 to 624 (LFAAAGQAVP…IRRMNQLLVS (72 aa)).

The protein belongs to the heat shock protein 90 family. In terms of assembly, homodimer.

The protein localises to the cytoplasm. In terms of biological role, molecular chaperone. Has ATPase activity. The polypeptide is Chaperone protein HtpG (Cronobacter sakazakii (strain ATCC BAA-894) (Enterobacter sakazakii)).